A 957-amino-acid polypeptide reads, in one-letter code: Protein translocase subunit SecA (957 aa).

Residues Gln-86, 104-108 (GEGKT), and Asp-494 contribute to the ATP site. Residues 929–947 (SRPAPAPTAAASPDPSSAS) are compositionally biased toward low complexity. The disordered stretch occupies residues 929–957 (SRPAPAPTAAASPDPSSASGVVEADFTEE).

It belongs to the SecA family. In terms of assembly, monomer and homodimer. Part of the essential Sec protein translocation apparatus which comprises SecA, SecYEG and auxiliary proteins SecDF. Other proteins may also be involved.

The protein resides in the cell inner membrane. Its subcellular location is the cellular thylakoid membrane. The protein localises to the cytoplasm. It catalyses the reaction ATP + H2O + cellular proteinSide 1 = ADP + phosphate + cellular proteinSide 2.. Functionally, part of the Sec protein translocase complex. Interacts with the SecYEG preprotein conducting channel. Has a central role in coupling the hydrolysis of ATP to the transfer of proteins into and across the cell membrane, serving as an ATP-driven molecular motor driving the stepwise translocation of polypeptide chains across the membrane. Its function is as follows. Probably participates in protein translocation into and across both the cytoplasmic and thylakoid membranes in cyanobacterial cells. The polypeptide is Protein translocase subunit SecA (Synechococcus sp. (strain JA-2-3B'a(2-13)) (Cyanobacteria bacterium Yellowstone B-Prime)).